The primary structure comprises 475 residues: Serralysin G (475 aa).

The propeptide occupies 1–14; sequence MALYGKKTDLSSAS. A Zn(2+)-binding site is contributed by His-186. The active site involves Glu-187. Zn(2+) contacts are provided by His-190 and Tyr-226. Ca(2+) contacts are provided by Arg-261, Gly-263, Thr-265, Asp-293, Gly-295, Gly-296, Asp-298, Glu-337, Gly-342, Gly-344, Asp-346, Asn-351, Asn-355, Gly-359, Gly-360, Ala-361, Gly-362, Asp-364, Gly-368, Gly-370, Gly-371, Asp-373, Gly-377, Gly-378, Ala-379, Gly-380, Asp-382, Asp-391, Asp-398, and Asp-408. 2 Hemolysin-type calcium-binding repeats span residues 340–357 and 358–375; these read IGGS…DNRI and DGGA…ADIL.

Belongs to the peptidase M10B family. Ca(2+) serves as cofactor. The cofactor is Zn(2+).

The protein localises to the secreted. It catalyses the reaction Preferential cleavage of bonds with hydrophobic residues in P1'.. The sequence is that of Serralysin G (prtG) from Dickeya chrysanthemi (Pectobacterium chrysanthemi).